A 246-amino-acid chain; its full sequence is Putative F-box/LRR-repeat protein 9 (246 aa).

In terms of domain architecture, F-box spans 18–65 (YRNWAELPPELTSSILLRLGAIEILQNAQRVCKSWRRVCQDPSMWRKI).

This is Putative F-box/LRR-repeat protein 9 (FBL9) from Arabidopsis thaliana (Mouse-ear cress).